A 99-amino-acid polypeptide reads, in one-letter code: Large ribosomal subunit protein bL21 (99 aa).

Belongs to the bacterial ribosomal protein bL21 family. As to quaternary structure, part of the 50S ribosomal subunit. Contacts protein L20.

In terms of biological role, this protein binds to 23S rRNA in the presence of protein L20. This chain is Large ribosomal subunit protein bL21, found in Mesoplasma florum (strain ATCC 33453 / NBRC 100688 / NCTC 11704 / L1) (Acholeplasma florum).